Reading from the N-terminus, the 295-residue chain is NAD kinase (295 aa).

The active-site Proton acceptor is the aspartate 74. Residues 74–75, 148–149, histidine 159, arginine 176, aspartate 178, and 189–194 each bind NAD(+); these read DG, ND, and TAYALS.

This sequence belongs to the NAD kinase family. The cofactor is a divalent metal cation.

The protein resides in the cytoplasm. The catalysed reaction is NAD(+) + ATP = ADP + NADP(+) + H(+). Involved in the regulation of the intracellular balance of NAD and NADP, and is a key enzyme in the biosynthesis of NADP. Catalyzes specifically the phosphorylation on 2'-hydroxyl of the adenosine moiety of NAD to yield NADP. This Legionella pneumophila (strain Corby) protein is NAD kinase.